The chain runs to 1061 residues: MQGKNSHLTGITGTTHFTIFGASPRSMSLVKNSQETPPFPGMNSTMRPVEFNSTKQPEAQTIDQEQDAPKSFDFKNQTLGVYSDTVLNPLKNDSFKDELVVDVQKNLPIESLTVSPKSSTDQNCRSTNEAIRIAGFDNFADQLQESNGVFEACPEAHSEQGNESEDFKDLINSETECNIEDVVLPTVHVSTDSEEIISGDVIMNDSNVVSKPKNLEKVETPDVLIGSGSNDKLSDMTEQIGNNQHLEKLISEKTEKSLSDNETTLKPVPVQHTNSVGSSIGTTSGDSEISDDDQKSWSPKNESLDYQPASTSSEFTETTSVANQTESNAGSVDDYCPRTSIDIGLDSSAPSCSSDATREPTPIKKRGRKKKEQSATEPPIPRTKRAYTKNPNTIRKRRMKKNQSDDEEDDGPPKRRTINYQIEFRDASGAWTMAQQLIFVRDFMSKKNDKIVKLSKSRQDRVDKFILQFQKTQDSHYMRAAIQLNTIFPDQGNYRHCQDYLKDLTIRVVVPPKRREGKRKSEVPANPPALLLTGPLYLNFYCTSQEVLEAAGQLLEFHVNAVYKDERLQPPVADKTLLDLERAMYHEQVKDLTDYHKYRIPCPTLTVTTKEEVFSSDFERILNSASITNISGIAKALNIKTELFSLPEIAKCHPELSIDILNQVPQSADGNCDSKGIRCWDVTSYSSKMKLQDFERYMQKEESEAMQAFETISNCTAKELESTCQKLKAERIAAQNAIEGCDETMPWIKFGTNIDLLSENFKKQMNEIEKLPTFLLPNREGNLLNYAGVDVLGINTVQMYAKPIGSRTPAHMENSLMASINWNRGPGTCVWFAVPYEYWGQLEFMIGEHGHKYQDQDYWPSEKELLELGVPVIKFEQKADEMVYVNTGCFHWVQSNSFCINVSWNVGQPNFTQLATSIVAHDHNMLIGNQAHVPLVNLVWNAARQRLFVDDPEMYKAMRGVMIRSLAHSKWYFDLIDHHDYIVGDASEWKLADRVQRCKYCTSEIFNIVRWYTTEDLSVDSYPFCSHCHVANEYKKDRFLKYTWFFSLETLVNIFDAYVPN.

Disordered regions lie at residues 30–49 (VKNSQETPPFPGMNSTMRPV) and 256–417 (KSLS…KRRT). Positions 271–287 (QHTNSVGSSIGTTSGDS) are enriched in polar residues. The segment covering 310 to 320 (STSSEFTETTS) has biased composition (low complexity). A compositionally biased stretch (polar residues) spans 321–330 (VANQTESNAG). Residues 369 to 417 (KKKEQSATEPPIPRTKRAYTKNPNTIRKRRMKKNQSDDEEDDGPPKRRT) are required for nuclear localization. Residues 418–759 (INYQIEFRDA…FGTNIDLLSE (342 aa)) are required for binding of unc-3 and for function in Y-to-PDA transdifferentiation. The 164-residue stretch at 760–923 (NFKKQMNEIE…LATSIVAHDH (164 aa)) folds into the JmjC domain. The Fe cation site is built by His-811, Glu-813, and His-891. Zn(2+) contacts are provided by Cys-998, Cys-1001, Cys-1025, and Cys-1028.

It belongs to the UTX family. As to quaternary structure, interacts with wdr-5.1 and unc-3. It depends on Fe(2+) as a cofactor. Mainly expressed in head and tail.

The protein resides in the nucleus. In terms of biological role, histone demethylase that specifically demethylates trimethylated 'Lys-27' of histone H3, a mark associated with transcriptional repression, thereby playing a central role in the histone code. Involved in the transcriptional regulation of the heat shock response, unfolded protein response and possibly other stress response target genes. Required for gonad development and organization. Required for the robust transdifferentiation of the Y rectal epithelial cell to the PDA motor neuron during larval development. Acts cell-autonomously in Y-to-PDA transdifferentiation, which depends on the demethylase activity and on recognition of the H3 tail. Cooperates with set-2 and unc-3 to ensure robust Y-to-PDA transdifferentiation. Promotes mitochondrial stress-induced longevity. Involved in lifespan regulation. The polypeptide is Lysine-specific demethylase jmjd-3.1 (Caenorhabditis elegans).